A 258-amino-acid chain; its full sequence is Phosphoprotein ECPP44 (258 aa).

Disordered stretches follow at residues 1–25 (MASDDSVPQHSVEKTTEYESSDRGL), 46–131 (EKVQ…PVEV), and 148–175 (KLPGGGKKVEEETVAPPPPPAAAPVDCA). Basic and acidic residues-rich tracts occupy residues 11-25 (SVEKTTEYESSDRGL), 46-80 (EKVQVSEPEPKYEDCKVVEEEEEKAAKPSLLEKLH), 109-124 (GLKEKIEEKIHHKEED), and 148-158 (KLPGGGKKVEE).

It belongs to the plant dehydrin family. In terms of processing, phosphorylated in embryogenic and somatic embryos. Not phosphorylated in non-embryogenic cells.

In terms of biological role, phosphorylation of ECCP44 protein is thought to be involved in the acquisition of embryogenic competence. Unlike other dehydrins, it is not thought to function as an environmental stress tolerant. This chain is Phosphoprotein ECPP44 (ECPP44), found in Daucus carota (Wild carrot).